We begin with the raw amino-acid sequence, 73 residues long: Mauriporin (73 aa).

Positions 1 to 22 (MNKKTLLVIFFITMLIVDEVNS) are cleaved as a signal peptide.

Belongs to the non-disulfide-bridged peptide (NDBP) superfamily. Long chain multifunctional peptide (group 2) family. As to expression, expressed by the venom gland.

The protein resides in the secreted. Its subcellular location is the target cell membrane. Functionally, amphipathic peptide that displays potent antimicrobial activities against a range of Gram-positive and Gram-negative planktonic bacteria with MIC values in the range 5 uM to 10 uM. In more details, it is active on Listeria ivanovii (MIC=5 uM), Staphylococcus epidermidis (MIC=10 uM), Salmonella enterica (MIC=5 uM), Pseudomonas aeruginosa (ATCC 27853) (MIC=5 uM), Acinetobacter baumannii (MIC=5 uM), Klebsiella pneumoniae (MIC=5 uM), Escherichia coli (MIC=7.5 uM), Salmonella typhimurium (MIC=7.5 uM), Pseudomonas aeruginosa (ATCC 9027) (MIC=10 uM). Is also able to prevent P.aeruginosa biofilm formation while showing weak hemolytic activity towards human erythrocytes. Probably induces bacterial cell death through membrane permeabilization. Moreover, shows DNA-binding activities. Also exerts potent selective cytotoxic and antiproliferative activity against three different prostate cancer cell lines (IC(50)=4.4-7.8 uM), compared to non-tumorigenic cell lines (IC(50)=59.7 uM in Vero and 62.5 uM in HUVEC cells). This peptide possibly exerts its cytotoxic activity through a necrotic mode of cell death. Only shows diminished hemolytic activity against sheep erythrocytes. Does not induce cell death through apoptosis and consequently is not acting upon an intracellular target. The protein is Mauriporin of Androctonus mauritanicus (Fat-tailed scorpion).